The chain runs to 443 residues: MMNHPHSSHIGTTNVKEEIGKLDRIRISGIGLVRYAFMAVLLIIAISTKTLPNTMIGAIFALVLMGHVFYYLGAHLPIFRSYLGGGSVFTILLTAILVATNVMPKYVVTTASGFINGMDFLGLYIVSLIASSLFKMDRKMLLKAAVRFLPVAFISMALTAVVIGIVGVIIGVGFNYAILYIAMPIMAGGVGAGIVPLSGIYAHAMGVGSAGILSKLFPTVILGNLLAIISAGLISRIFKDSKGNGHGEILRGEREDAAAAAEEIKPDYVQLGVGLIIAVMFFMIGTMLNKVFPGINAYAFIILSIVLTKAFGLLPKYYEDSVIMFGQVIVKNMTHALLAGVGLSLLDMHVLLAALSWQFVVLCLVSIVAISLISATLGKLFGLYPVEAAITAGLANNSMGGTGNVAVLAASERMNLIAFAQMGNRIGGALILVVAGILVTFMK.

A run of 13 helical transmembrane segments spans residues 27–47 (ISGI…IAIS), 59–79 (IFAL…LPIF), 83–103 (LGGG…TNVM), 114–134 (FING…SSLF), 151–171 (VAFI…VIIG), 177–197 (AILY…IVPL), 209–229 (SAGI…LAII), 268–288 (YVQL…GTML), 294–314 (GINA…FGLL), 322–342 (VIMF…AGVG), 350–370 (VLLA…IVAI), 388–410 (AAIT…VLAA), and 422–442 (MGNR…VTFM).

Belongs to the 2-hydroxycarboxylate transporter (2-HCT) (TC 2.A.24) family.

The protein resides in the cell membrane. It catalyses the reaction (R)-lactate(in) + citrate(out) = (R)-lactate(out) + citrate(in). The catalysed reaction is (S)-lactate(in) + citrate(out) = (S)-lactate(out) + citrate(in). It carries out the reaction citrate(in) + H(+)(in) = citrate(out) + H(+)(out). Its activity is regulated as follows. Uptake of citrate is not affected by the absence or presence of Na(+) up to 25 mM and is increasingly inhibited by increasing Mg(2+) concentrations. Functionally, secondary transporter involved in citrate metabolism. During cometabolism of citrate and glucose, catalyzes the uptake of divalent citrate into the cell coupled to the exit of monovalent lactate, a product of citrate fermentation during citrate-glucose cometabolism (precursor/product exchange). The citrate/lactate exchange is electrogenic and results in the generation of a membrane potential. In the absence of glucose, i.e. when no lactate is produced, CitP catalyzes the proton-dependent transport of citrate and malate. Transports the divalent form of citrate and malate with the concomitant uptake of one proton, therefore translocating a single unit of negative charge across the membrane. In vitro, transports a range of substrates that contain the 2-hydroxycarboxylate motif, HO-CR(2)-COO(-), with a preference for malate, citrate and monovalent 2-hydroxyisobutyrate. Modification of the OH or the COO(-) groups of the 2-hydroxycarboxylate motif drastically reduces the affinity of the transporter for the substrates, indicating their relevance in substrate recognition. Significant activity is also observed with some 2-oxocarboxylates and a 3-hydroxycarboxylate. The protein is Citrate transporter CitP of Leuconostoc mesenteroides subsp. mesenteroides.